A 371-amino-acid polypeptide reads, in one-letter code: Peptide chain release factor 2 (371 aa).

Position 251 is an N5-methylglutamine (glutamine 251).

This sequence belongs to the prokaryotic/mitochondrial release factor family. Post-translationally, methylated by PrmC. Methylation increases the termination efficiency of RF2.

The protein localises to the cytoplasm. Peptide chain release factor 2 directs the termination of translation in response to the peptide chain termination codons UGA and UAA. The sequence is that of Peptide chain release factor 2 from Pseudarthrobacter chlorophenolicus (strain ATCC 700700 / DSM 12829 / CIP 107037 / JCM 12360 / KCTC 9906 / NCIMB 13794 / A6) (Arthrobacter chlorophenolicus).